A 699-amino-acid chain; its full sequence is MSKMNKLEHIRNIGICAHIDAGKTTTTERILYYTGKSHKIGEVHDGGATMDWMEQEQERGITITSAATTCRWQDKIINIIDTPGHVDFTIEVERSLRVLDGAVAVFDGVAGVEPQSETVWRQADKYNVPRMCFVNKMDRMGADFYRCVEMIKDRLGAKPLVLQLPVGIEENFKGIIDLVKMKAVIWKDESLGAEYCEEDIPADMKDKAEEYRAKLLDMVVELDDTIMEKYLSGEEVTEEEIKRLIRKGTISAAFYPVLCGSAFKNKGVQPLLDAVVYFLPSPIDIGIVKGIEVSTGEEKDFPVSVIEPFAALAFKIMNDPFVGSLTFIRIYSGKIASGITVINTVKNKKEKIGRMLLMHANNREDVKEASAGDIVALAGLKDTTTGDTLSDVDKQVILERMEFPEPVIELAVEPKSTADQEKMGLALSRLAAEDPSFRVSMDHETGQTVIKGMGELHLEIIIDRMRREFKVEANIGAPQVAYRETITKACEIDYTHKKQSGGAGQFARVKIIFEPLKEVKDLEDEDKNKTFVFASKIVGGAVPKEYIPGVEKGLNNIRETGVIAGYPMIDFKATLVDGAFHDVDSSVLAFEIAAKAAFREGMPKGDPKLLEPIMKVEVITPDEYMGDIIGDLNSRRGQIQSMDPRGNAQVVTANVPLAEMFGYVNTLRSLSQGRAQFSMIFSHYDQVPSQVADIIKAKK.

The 276-residue stretch at 8-283 (EHIRNIGICA…AVVYFLPSPI (276 aa)) folds into the tr-type G domain. Residues 17–24 (AHIDAGKT), 81–85 (DTPGH), and 135–138 (NKMD) contribute to the GTP site.

It belongs to the TRAFAC class translation factor GTPase superfamily. Classic translation factor GTPase family. EF-G/EF-2 subfamily.

It is found in the cytoplasm. In terms of biological role, catalyzes the GTP-dependent ribosomal translocation step during translation elongation. During this step, the ribosome changes from the pre-translocational (PRE) to the post-translocational (POST) state as the newly formed A-site-bound peptidyl-tRNA and P-site-bound deacylated tRNA move to the P and E sites, respectively. Catalyzes the coordinated movement of the two tRNA molecules, the mRNA and conformational changes in the ribosome. This is Elongation factor G from Rickettsia akari (strain Hartford).